The following is a 1749-amino-acid chain: MQLKHLRTLLSPQDGAAKVTCMAWSQNNAKFAVCTVDRVVLLYDEHGERRDKFSTKPADMKYGRKSYMVKGMAFSPDSTKIAIGQTDNIIYVYKIGEDWGDKKVICNKFIQTSAVTCLQWPAEYIIVFGLAEGKVRLANTKTNKSSTIYGTDSYVVALTTNCSGKGILSGHADGTIVRYFFDDEGSGESQGKLVNHPCPPYALAWATNSIVAAGCDRRIVAYGKEGHVLQTFDYSRDPQEREFTTAAASPGGQSVVLGSYDRLRVFNWSPRRSIWEEAKPKEIANLYTVTALAWKRDGSRLCAGTLCGGVEQFDCCLRRSIYKNKFELTYVGPSQLIVKNLSSGTRVVLKSHYGYEVEEVKILGKERYLVAHTSDTLLLGDLNTNRLSEIPWQGSGGNEKYFFENENVCMIFNAGELTLVEYGSNDSLGSVRTEFMNPHLISVRINERCQRGMEDNKKLAYLVDIKTIAIVDLIGGYNIGTISHESRVDWLELNETGHKLLFRDRKLRLHLYDIESCSKTMILNFCSYVQWVPGSDVLVAQNRNSLCVWYNIEAPERVTMSSIRGDVVGLERGGGKTEVMVTEGVTTVAYTLDEGLIEFGTAIDDGNYTRATAFLETLEMTPETEAMWKTLSKLALEARQLHTAERCFSALGHVAKARFLHETNEIADQVSREYGGEGTDFYQVRARLAMLEKNYKLAEMIFLEQNAVEEAMDMYQELHRWDECIAVAEAKGHPALEKLRRDYYQRLMDTQQEERAGELQESQGDGLAAISLYLKAGLPAKAARLVLTREELLANTELVEHITTALIKGELYERAGDLFEKIRNPQRALECYCKGNAFMKAVELARLAFPVEVVRLEEAWGDHLVQQKQLDAAINHYIEARCSIKAIEAALGARQWKKAIYILDLQDRNTASKYYPRVAQHYASLQEYEIAEELYTKGDRTKDAIDMYTQAGRWEQAHKLAMKCMRPEDVSVLYITQAQEMEKQGKYREAERLYVTVEEPDLAITMFKKHKLYDDMIRLVGKHHPDLLSDTHLHLGKELETEGRLQEAEYHYLEAQEWKATVNMYRSSGLWEEAYRVAKAHGGANAHKHVAYLWAKSLGGEAAVRLLNKLGLLEAAIDHAADNCSFEFAFELSRLALKHKTPEIHLRYAMYLEDEGKFEEAEAEFIRAGKPKEAVLMFVHNQDWEAAQRVAEAHDPDSVAEVLVGQARGALEEKDFQKAEGLLLRAQRPGLALNYYKEAGLWSDALRICKDYVPGQLEALQEEYEREATKKGGRGVEGLVEQARQWEQAGEYSRAVDCYLKVRDSGSSGLMEKCWMKAAELSIKFLPPQRSLEVVRVVGPQLIGIGKHSASAELYLNLDLVKEAIDAFIEGEEWNKAKRVAKELDPRYEDYVDQHYKEFLKNQGKVDSLVGVDVVAALDLYVEQGQWDKCIETATKQNYKILHKYVALYATHLIREGGYAQALALYVQHGAPANPQNFNIYKRIFTDMVSSPGTNNAEAYHSWADLRDVLFNLCENLVKSSEANSAAHEEFEMMLLIAHYYATRSAAQSIKQLETVAARLSVSLLRHTQLLPADKAFYEAGTAAKEVGWENMAFIFFNRFLDLTDAIEEGTLDALDHSDFQDTDIPFEVPLPAKQHVPEAQREEVRDWVLTVSMDQRLEQVLPRDERGVYEASLVAASTGVRALPCLITGYPILRNKIEFKRPGKAANKDNWNKFLMAIKTSHSPVCQDVLKFISQWCGGLPSTSFSFQ.

M1 is modified (N-acetylmethionine). K4 participates in a covalent cross-link: Glycyl lysine isopeptide (Lys-Gly) (interchain with G-Cter in SUMO1). WD repeat units follow at residues 14–53 (DGAA…RDKF), 64–103 (RKSY…GDKK), 110–148 (IQTS…SSTI), 150–191 (GTDS…ESQG), 195–233 (NHPC…QTFD), 238–278 (PQER…WEEA), 284–323 (ANLY…SIYK), 483–520 (SHES…CSKT), and 521–559 (MILN…ERVT). The stretch at 593–624 (DEGLIEFGTAIDDGNYTRATAFLETLEMTPET) is one TPR 1 repeat. R672 bears the Omega-N-methylarginine mark. 13 TPR repeats span residues 692-725 (EKNY…DECI), 809-842 (GELY…MKAV), 854-887 (VRLE…IKAI), 912-945 (SKYY…KDAI), 947-970 (MYTQ…PEDV), 971-1004 (SVLY…DLAI), 1042-1075 (EGRL…EEAY), 1142-1175 (PEIH…KEAV), 1276-1309 (VEGL…GSSG), 1345-1378 (IGKH…NKAK), 1411-1445 (GVDV…LHKY), 1447-1477 (ALYA…NPQN), and 1574-1607 (DKAF…TDAI).

Belongs to the IFT172 family. As to quaternary structure, interacts with IFT88. Interacts with IFT57. Interacts with RABL2/RABL2A; binds preferentially to GDP-bound RABL2. May interact with LHX3 and LHX4; the relevance of such interaction is however unclear in vivo. Highly expressed in the testis and pituitary cells.

The protein resides in the cell projection. It is found in the cilium. Its subcellular location is the nucleus. Functionally, required for the maintenance and formation of cilia. Plays an indirect role in hedgehog (Hh) signaling, cilia being required for all activity of the hedgehog pathway. This chain is Intraflagellar transport protein 172 homolog (Ift172), found in Rattus norvegicus (Rat).